Reading from the N-terminus, the 1074-residue chain is Transmembrane protein 132E (1074 aa).

An N-terminal signal peptide occupies residues 1-25 (MAPGMSGRGGAALLCLSALLAHASG). At 26-893 (RSHPASPSPP…LTDLEIGMYA (868 aa)) the chain is on the extracellular side. Asn70 and Asn91 each carry an N-linked (GlcNAc...) asparagine glycan. Disordered stretches follow at residues 202–226 (PPAP…ATGE) and 241–264 (ASGG…ESPT). Over residues 243–256 (GGCGGSRRGAGPGV) the composition is skewed to gly residues. Asn318 and Asn399 each carry an N-linked (GlcNAc...) asparagine glycan. 2 disordered regions span residues 563 to 585 (RSVR…ASRG) and 814 to 867 (GRDE…VPPT). Residues 841–862 (GAGPPGSALPAPEAPGPGTASP) show a composition bias toward low complexity. The helical transmembrane segment at 894–914 (LLGVFCLAILVFLINCIVFVL) threads the bilayer. Residues 915–1074 (RYRHKRIPPE…NYMRRIKEIA (160 aa)) are Cytoplasmic-facing. The tract at residues 946–1063 (VQGELSPPAG…PTRPTAPPDL (118 aa)) is disordered. The span at 972–984 (SGSSQTSVQSQVH) shows a compositional bias: low complexity. Acidic residues predominate over residues 1034 to 1044 (GEEDEEEEEDL).

Belongs to the TMEM132 family.

The protein localises to the membrane. In terms of biological role, required for normal inner ear hair cell function and hearing. In Homo sapiens (Human), this protein is Transmembrane protein 132E.